A 693-amino-acid chain; its full sequence is Translation factor GUF1 homolog, chloroplastic (693 aa).

The transit peptide at 1-51 (MATDLSSSSTLLLSRNCKTPPFYHTTNSLSLSKTHHLYASRNAVVSRLRLL) directs the protein to the chloroplast. The region spanning 86 to 267 (SNIRNFCIIA…AIVERIPSPR (182 aa)) is the tr-type G domain. GTP contacts are provided by residues 95-102 (AHIDHGKS), 160-164 (DTPGH), and 214-217 (NKID).

It belongs to the TRAFAC class translation factor GTPase superfamily. Classic translation factor GTPase family. LepA subfamily.

The protein localises to the plastid. It is found in the chloroplast. It catalyses the reaction GTP + H2O = GDP + phosphate + H(+). In terms of biological role, promotes chloroplast protein synthesis. May act as a fidelity factor of the translation reaction, by catalyzing a one-codon backward translocation of tRNAs on improperly translocated ribosomes. The sequence is that of Translation factor GUF1 homolog, chloroplastic from Ricinus communis (Castor bean).